A 147-amino-acid polypeptide reads, in one-letter code: Large ribosomal subunit protein bL9 (147 aa).

The protein belongs to the bacterial ribosomal protein bL9 family.

In terms of biological role, binds to the 23S rRNA. The protein is Large ribosomal subunit protein bL9 of Marinomonas sp. (strain MWYL1).